The primary structure comprises 506 residues: Zinc finger and SCAN domain containing protein 4F (506 aa).

Residues M1–S24 are disordered. The SCAN box domain maps to S37–C119. 4 consecutive C2H2-type zinc fingers follow at residues Y395–H417, L424–H446, F452–H474, and Y480–H503.

Up-regulated in blastocyst outgrowths and is detectable in a mosaic fashion in ES cultures.

The protein resides in the nucleus. Its subcellular location is the chromosome. The protein localises to the telomere. Its function is as follows. Transcription factor required to regulate early development. Binds telomeres and plays a key role in genomic stability by regulating telomere elongation. Acts as an activator of spontaneous telomere sister chromatid exchange (T-SCE) and telomere elongation. This is Zinc finger and SCAN domain containing protein 4F (Zscan4f) from Mus musculus (Mouse).